The following is a 32-amino-acid chain: Ferredoxin (32 aa).

Positions 3 to 32 (YKVRLLSEAEGIDVTIDCADDVYILDAAEE) constitute a 2Fe-2S ferredoxin-type domain.

The protein belongs to the 2Fe2S plant-type ferredoxin family. [2Fe-2S] cluster serves as cofactor.

The protein localises to the plastid. Its subcellular location is the chloroplast. Ferredoxins are iron-sulfur proteins that transfer electrons in a wide variety of metabolic reactions. This is Ferredoxin from Porphyridium purpureum (Red alga).